Here is a 423-residue protein sequence, read N- to C-terminus: Serine--tRNA ligase (423 aa).

229 to 231 (TAE) contributes to the L-serine binding site. 258–260 (RRE) contacts ATP. Glu281 contributes to the L-serine binding site. 345–348 (EISS) contacts ATP. Ser379 lines the L-serine pocket.

Belongs to the class-II aminoacyl-tRNA synthetase family. Type-1 seryl-tRNA synthetase subfamily. In terms of assembly, homodimer. The tRNA molecule binds across the dimer.

It localises to the cytoplasm. The enzyme catalyses tRNA(Ser) + L-serine + ATP = L-seryl-tRNA(Ser) + AMP + diphosphate + H(+). It catalyses the reaction tRNA(Sec) + L-serine + ATP = L-seryl-tRNA(Sec) + AMP + diphosphate + H(+). It functions in the pathway aminoacyl-tRNA biosynthesis; selenocysteinyl-tRNA(Sec) biosynthesis; L-seryl-tRNA(Sec) from L-serine and tRNA(Sec): step 1/1. Catalyzes the attachment of serine to tRNA(Ser). Is also able to aminoacylate tRNA(Sec) with serine, to form the misacylated tRNA L-seryl-tRNA(Sec), which will be further converted into selenocysteinyl-tRNA(Sec). This chain is Serine--tRNA ligase (serS1), found in Methanosarcina barkeri (strain Fusaro / DSM 804).